A 1006-amino-acid chain; its full sequence is SAC3 family protein A (1006 aa).

7 disordered regions span residues 1-75, 106-162, 183-239, 266-326, 516-550, 595-638, and 650-690; these read MNHG…GPAT, TPYQ…PGSY, GYQS…TIAT, GTEK…AVST, TVTT…RWEP, GFKP…SDKD, and AGSA…GNLH. Polar residues-rich tracts occupy residues 26-75 and 106-115; these read GSQT…GPAT and TPYQTSSDPH. Positions 116–140 are enriched in low complexity; the sequence is NYSNTGYSNYYSGYQQQPSQSYPQP. Over residues 144–162 the composition is skewed to polar residues; the sequence is YQNTGAPQPLSSFQNPGSY. 2 stretches are compositionally biased toward polar residues: residues 269–282 and 313–326; these read KLST…SQSF and SHPP…AVST. The segment covering 516 to 539 has biased composition (low complexity); the sequence is TVTTTNVTNSESSSAQLSSLQNKS. The span at 609-618 shows a compositional bias: basic residues; sequence SFQRPVKRQR. Residues 653–680 show a composition bias toward basic and acidic residues; it reads AEEKKRRDSRSKRFEKIQGHSRGNDLTK. The 175-residue stretch at 804 to 978 folds into the PCI domain; the sequence is DLPEYNQCLS…DMLLDTKATS (175 aa).

It belongs to the SAC3 family. Interacts with EER5, SAC3B and CML20.

It is found in the nucleus. Component of the TREX-2 complex (transcription and export complex 2), a muliprotein complex that functions in docking export-competent ribonucleoprotein particles (mRNPs) to the nuclear entrance of the nuclear pore complex (nuclear basket). TREX-2 participates in mRNA export and accurate chromatin positioning in the nucleus by tethering genes to the nuclear periphery. In Arabidopsis thaliana (Mouse-ear cress), this protein is SAC3 family protein A.